A 188-amino-acid chain; its full sequence is Preprocaerulein type-1 (188 aa).

A signal peptide spans 1–26 (MFKGILLCVLFAVLSANPLSQPEGFA). Positions 27 to 170 (DEERDVRGLA…ANDERRFADG (144 aa)) are excised as a propeptide. The interval 152–188 (LGGSPQQREANDERRFADGQQDYTGWMDFGRRNGEDD) is disordered. Y174 is modified (sulfotyrosine). The residue at position 180 (F180) is a Phenylalanine amide. Positions 184-188 (NGEDD) are excised as a propeptide.

This sequence belongs to the gastrin/cholecystokinin family. Expressed by the skin glands.

The protein localises to the secreted. The pharmacological activities of caerulein are quite similar to the physiological activities of gastrin and related peptides. This Xenopus laevis (African clawed frog) protein is Preprocaerulein type-1.